A 578-amino-acid chain; its full sequence is Arginine--tRNA ligase (578 aa).

The short motif at 123 to 133 (PNIAKEMHVGH) is the 'HIGH' region element.

This sequence belongs to the class-I aminoacyl-tRNA synthetase family. In terms of assembly, monomer.

Its subcellular location is the cytoplasm. It carries out the reaction tRNA(Arg) + L-arginine + ATP = L-arginyl-tRNA(Arg) + AMP + diphosphate. In Baumannia cicadellinicola subsp. Homalodisca coagulata, this protein is Arginine--tRNA ligase.